The following is a 287-amino-acid chain: Protein-export membrane protein SecF (287 aa).

6 helical membrane passes run 21 to 41 (LIAI…FNGL), 129 to 149 (QIYW…FIIF), 158 to 178 (VILA…LFGI), 182 to 202 (LASV…DILL), 226 to 246 (VTMS…TVFV), and 259 to 279 (VLII…LGIL).

It belongs to the SecD/SecF family. SecF subfamily. In terms of assembly, part of the protein translocation apparatus. Forms a complex with SecD.

Its subcellular location is the cell membrane. Functionally, involved in protein export. The sequence is that of Protein-export membrane protein SecF from Methanothermobacter thermautotrophicus (strain ATCC 29096 / DSM 1053 / JCM 10044 / NBRC 100330 / Delta H) (Methanobacterium thermoautotrophicum).